Reading from the N-terminus, the 386-residue chain is Inactive GDSL esterase/lipase-like protein 23 (386 aa).

Residues 1–29 form the signal peptide; sequence MMAKNCNLVSVLCVFLVLTLFNKPITVAG. Serine 43 (nucleophile) is an active-site residue. Residues asparagine 105, asparagine 165, and asparagine 288 are each glycosylated (N-linked (GlcNAc...) asparagine). Residues aspartate 322 and histidine 325 contribute to the active site.

Belongs to the 'GDSL' lipolytic enzyme family. In terms of assembly, part of the PYK10 complex. Interacts with MVP1. As to expression, expressed mainly in roots.

It localises to the endoplasmic reticulum. Involved in the control of the PYK10 complex size and possibly substrate specificity. May be exported from the endoplasmic reticulum upon interaction with MVP1. The polypeptide is Inactive GDSL esterase/lipase-like protein 23 (GLL23) (Arabidopsis thaliana (Mouse-ear cress)).